Consider the following 313-residue polypeptide: Putative serine protease 29 (313 aa).

Pro residues predominate over residues 1–22; sequence MPTTPDPGSEPPARTPRPPPLT. The interval 1–27 is disordered; it reads MPTTPDPGSEPPARTPRPPPLTPGLSP. The Peptidase S1 domain maps to 68–310; sequence IVGGHNAPPG…YVPWILQQVG (243 aa). C99 and C115 form a disulfide bridge. Residue H114 is the Charge relay system of the active site. N-linked (GlcNAc...) asparagine glycosylation occurs at N143. Catalysis depends on D161, which acts as the Charge relay system. Cystine bridges form between C193–C268, C226–C249, and C258–C286. S262 (charge relay system) is an active-site residue.

The protein belongs to the peptidase S1 family.

The protein resides in the secreted. The polypeptide is Putative serine protease 29 (PRSS29P) (Homo sapiens (Human)).